Here is a 157-residue protein sequence, read N- to C-terminus: Small ribosomal subunit protein uS7 (157 aa).

This sequence belongs to the universal ribosomal protein uS7 family. As to quaternary structure, part of the 30S ribosomal subunit. Contacts proteins S9 and S11.

One of the primary rRNA binding proteins, it binds directly to 16S rRNA where it nucleates assembly of the head domain of the 30S subunit. Is located at the subunit interface close to the decoding center, probably blocks exit of the E-site tRNA. This is Small ribosomal subunit protein uS7 from Pseudomonas fluorescens (strain Pf0-1).